The primary structure comprises 248 residues: Probable transcriptional regulatory protein Mnod_7401 (248 aa).

Belongs to the TACO1 family.

Its subcellular location is the cytoplasm. The polypeptide is Probable transcriptional regulatory protein Mnod_7401 (Methylobacterium nodulans (strain LMG 21967 / CNCM I-2342 / ORS 2060)).